A 714-amino-acid polypeptide reads, in one-letter code: T-cell activation Rho GTPase-activating protein (714 aa).

In terms of domain architecture, Rho-GAP spans Gln88–Phe277. Disordered regions lie at residues Asp290–Val357, Gln370–Pro419, Gln451–Ser508, Arg520–Thr563, and Lys623–Ser650. Over residues Ser299–Asp311 the composition is skewed to polar residues. The residue at position 398 (Ser398) is a Phosphoserine. Low complexity predominate over residues Ser459–Pro471. Basic and acidic residues-rich tracts occupy residues Lys492–Glu501 and Glu527–Ser545.

As to expression, highly expressed in testis.

In terms of biological role, may function as a GTPase-activating protein. May play a role in transmission ratio distortion (TRD) in mouse, in which heterozygous males for t-locus transmit their t-carrying chromosome to 95% or more of their offspring. The sequence is that of T-cell activation Rho GTPase-activating protein (Tagap) from Mus musculus (Mouse).